The chain runs to 219 residues: Interleukin-12 subunit alpha (219 aa).

The signal sequence occupies residues 1–22; it reads MCPARSLLLVATLVLLDYLSLA. Asparagine 24 and asparagine 93 each carry an N-linked (GlcNAc...) asparagine glycan. 3 disulfide bridges follow: cysteine 37-cysteine 110, cysteine 64-cysteine 196, and cysteine 85-cysteine 123.

This sequence belongs to the IL-6 superfamily. In terms of assembly, heterodimer with IL12B; disulfide-linked. This heterodimer is known as interleukin IL-12. Heterodimer with EBI3/IL27B; not disulfide-linked. This heterodimer is known as interleukin IL-35. Interacts with NBR1; this interaction promotes IL-12 secretion.

It localises to the secreted. Heterodimerizes with IL12B to form the IL-12 cytokine or with EBI3/IL27B to form the IL-35 cytokine. IL-12 is primarily produced by professional antigen-presenting cells (APCs) such as B-cells and dendritic cells (DCs) as well as macrophages and granulocytes and regulates T-cell and natural killer-cell responses, induces the production of interferon-gamma (IFN-gamma), favors the differentiation of T-helper 1 (Th1) cells and is an important link between innate resistance and adaptive immunity. Mechanistically, exerts its biological effects through a receptor composed of IL12R1 and IL12R2 subunits. Binding to the receptor results in the rapid tyrosine phosphorylation of a number of cellular substrates including the JAK family kinases TYK2 and JAK2. In turn, recruited STAT4 gets phosphorylated and translocates to the nucleus where it regulates cytokine/growth factor responsive genes. As part of IL-35, plays essential roles in maintaining the immune homeostasis of the liver microenvironment and also functions as an immune-suppressive cytokine. Mediates biological events through unconventional receptors composed of IL12RB2 and gp130/IL6ST heterodimers or homodimers. Signaling requires the transcription factors STAT1 and STAT4, which form a unique heterodimer that binds to distinct DNA sites. The polypeptide is Interleukin-12 subunit alpha (IL12A) (Papio anubis (Olive baboon)).